Reading from the N-terminus, the 237-residue chain is Large ribosomal subunit protein uL1 (237 aa).

This sequence belongs to the universal ribosomal protein uL1 family. In terms of assembly, part of the 50S ribosomal subunit.

Functionally, binds directly to 23S rRNA. The L1 stalk is quite mobile in the ribosome, and is involved in E site tRNA release. Protein L1 is also a translational repressor protein, it controls the translation of the L11 operon by binding to its mRNA. This Leptothrix cholodnii (strain ATCC 51168 / LMG 8142 / SP-6) (Leptothrix discophora (strain SP-6)) protein is Large ribosomal subunit protein uL1.